The following is a 216-amino-acid chain: ATP phosphoribosyltransferase (216 aa).

This sequence belongs to the ATP phosphoribosyltransferase family. Short subfamily. Heteromultimer composed of HisG and HisZ subunits.

Its subcellular location is the cytoplasm. The enzyme catalyses 1-(5-phospho-beta-D-ribosyl)-ATP + diphosphate = 5-phospho-alpha-D-ribose 1-diphosphate + ATP. Its pathway is amino-acid biosynthesis; L-histidine biosynthesis; L-histidine from 5-phospho-alpha-D-ribose 1-diphosphate: step 1/9. Its function is as follows. Catalyzes the condensation of ATP and 5-phosphoribose 1-diphosphate to form N'-(5'-phosphoribosyl)-ATP (PR-ATP). Has a crucial role in the pathway because the rate of histidine biosynthesis seems to be controlled primarily by regulation of HisG enzymatic activity. In Nitrosomonas eutropha (strain DSM 101675 / C91 / Nm57), this protein is ATP phosphoribosyltransferase.